The sequence spans 535 residues: Portal protein (535 aa).

Belongs to the podoviridae portal protein family. Homododecamer. Interacts with major capsid protein. Interacts with the tail tube proteins gp11 and gp12. Interacts with the terminase large subunit. Interacts with the internal virion protein gp14.

Its subcellular location is the virion. Forms the portal vertex of the capsid. This portal plays critical roles in head assembly, genome packaging, neck/tail attachment, and genome ejection. The portal protein multimerizes as a single ring-shaped homododecamer arranged around a central channel. This is Portal protein (8) from Enterobacteria phage T3 (Bacteriophage T3).